The sequence spans 136 residues: Large ribosomal subunit protein uL16 (136 aa).

Belongs to the universal ribosomal protein uL16 family. As to quaternary structure, part of the 50S ribosomal subunit.

Its function is as follows. Binds 23S rRNA and is also seen to make contacts with the A and possibly P site tRNAs. The polypeptide is Large ribosomal subunit protein uL16 (Vibrio vulnificus (strain YJ016)).